We begin with the raw amino-acid sequence, 161 residues long: DNA endonuclease I-CvuI (161 aa).

It belongs to the LAGLIDADG endonuclease family.

Its subcellular location is the plastid. It is found in the chloroplast. Probable endonuclease involved in intron homing. This is DNA endonuclease I-CvuI from Chlorella vulgaris (Green alga).